A 128-amino-acid chain; its full sequence is Putative esterase aq_1494 (128 aa).

Residue aspartate 15 is part of the active site.

Belongs to the 4-hydroxybenzoyl-CoA thioesterase family.

In Aquifex aeolicus (strain VF5), this protein is Putative esterase aq_1494.